Reading from the N-terminus, the 132-residue chain is ATP synthase epsilon chain (132 aa).

It belongs to the ATPase epsilon chain family. F-type ATPases have 2 components, CF(1) - the catalytic core - and CF(0) - the membrane proton channel. CF(1) has five subunits: alpha(3), beta(3), gamma(1), delta(1), epsilon(1). CF(0) has three main subunits: a, b and c.

The protein resides in the cell inner membrane. Functionally, produces ATP from ADP in the presence of a proton gradient across the membrane. The sequence is that of ATP synthase epsilon chain from Jannaschia sp. (strain CCS1).